The following is a 358-amino-acid chain: N-acylethanolamine-hydrolyzing acid amidase (358 aa).

The N-terminal stretch at 1–26 is a signal peptide; it reads MQGTGHPVRPVLELLLLLLLLAGVGG. 2 N-linked (GlcNAc...) asparagine glycosylation sites follow: Asn39 and Asn108. Residue Cys127 is the Nucleophile of the active site. 3 N-linked (GlcNAc...) asparagine glycosylation sites follow: Asn310, Asn334, and Asn356.

It belongs to the acid ceramidase family. Heterodimer of an alpha and a beta subunit, produced by autocatalytic cleavage. In terms of processing, N-glycosylated. Tunicamycin treatment causes a reduction in specific activity against N-palmitoylethanolamine. Post-translationally, autoproteolytic cleavage at pH 4.5 gives rise to the alpha and beta subunit. Cleavage gives rise to a conformation change that activates the enzyme. The same catalytic Cys residue mediates the autoproteolytic cleavage and subsequent hydrolysis of lipid substrates.

Its subcellular location is the lysosome. The protein resides in the membrane. The catalysed reaction is N-hexadecanoylethanolamine + H2O = ethanolamine + hexadecanoate. It carries out the reaction an N-(long-chain fatty acyl)ethanolamine + H2O = a long-chain fatty acid + ethanolamine. The enzyme catalyses N-dodecanoylethanolamine + H2O = dodecanoate + ethanolamine. It catalyses the reaction N-tetradecanoylethanolamine + H2O = tetradecanoate + ethanolamine. The catalysed reaction is an N-acylsphing-4-enine + H2O = sphing-4-enine + a fatty acid. It carries out the reaction N-hexadecanoylsphing-4-enine + H2O = sphing-4-enine + hexadecanoate. The enzyme catalyses N-dodecanoylsphing-4-enine + H2O = dodecanoate + sphing-4-enine. Its pathway is lipid metabolism; fatty acid metabolism. Degrades bioactive fatty acid amides to their corresponding acids, with the following preference: N-palmitoylethanolamine &gt; N-myristoylethanolamine &gt; N-stearoylethanolamine &gt; N-oleoylethanolamine &gt; N-linoleoylethanolamine &gt; N-arachidonoylethanolamine. This Oryctolagus cuniculus (Rabbit) protein is N-acylethanolamine-hydrolyzing acid amidase.